Reading from the N-terminus, the 342-residue chain is Succinoglycan biosynthesis protein ExoU (342 aa).

This sequence belongs to the glycosyltransferase 2 family.

It is found in the cytoplasm. The protein operates within glycan metabolism; exopolysaccharide biosynthesis. Its function is as follows. Glycosyltransferase required for the synthesis of succinoglycan (EPS I). Needed for the addition of the sixth sugar (glucose), catalyzes the formation of a beta-1,6 linkage between the fifth and sixth sugar. This is Succinoglycan biosynthesis protein ExoU (exoU) from Rhizobium meliloti (strain 1021) (Ensifer meliloti).